A 155-amino-acid polypeptide reads, in one-letter code: Ribosomal RNA large subunit methyltransferase H (155 aa).

Residues Leu-72, Gly-103, and 122–127 (LSPLTL) contribute to the S-adenosyl-L-methionine site.

It belongs to the RNA methyltransferase RlmH family. Homodimer.

Its subcellular location is the cytoplasm. The catalysed reaction is pseudouridine(1915) in 23S rRNA + S-adenosyl-L-methionine = N(3)-methylpseudouridine(1915) in 23S rRNA + S-adenosyl-L-homocysteine + H(+). Specifically methylates the pseudouridine at position 1915 (m3Psi1915) in 23S rRNA. The sequence is that of Ribosomal RNA large subunit methyltransferase H from Actinobacillus pleuropneumoniae serotype 5b (strain L20).